The chain runs to 619 residues: Elongation factor 4 (619 aa).

The tr-type G domain occupies 17 to 198 (SVIRNFCIIA…RVVRAIPGPE (182 aa)). GTP is bound by residues 29-34 (DHGKST) and 145-148 (NKID).

It belongs to the TRAFAC class translation factor GTPase superfamily. Classic translation factor GTPase family. LepA subfamily.

Its subcellular location is the cell membrane. The catalysed reaction is GTP + H2O = GDP + phosphate + H(+). Required for accurate and efficient protein synthesis under certain stress conditions. May act as a fidelity factor of the translation reaction, by catalyzing a one-codon backward translocation of tRNAs on improperly translocated ribosomes. Back-translocation proceeds from a post-translocation (POST) complex to a pre-translocation (PRE) complex, thus giving elongation factor G a second chance to translocate the tRNAs correctly. Binds to ribosomes in a GTP-dependent manner. This is Elongation factor 4 from Micrococcus luteus (strain ATCC 4698 / DSM 20030 / JCM 1464 / CCM 169 / CCUG 5858 / IAM 1056 / NBRC 3333 / NCIMB 9278 / NCTC 2665 / VKM Ac-2230) (Micrococcus lysodeikticus).